The sequence spans 64 residues: Small ribosomal subunit protein bS21 (64 aa).

The segment at 40–64 is disordered; that stretch reads PPSVKRKIKSQEAQRRMRRTKRKRF. Over residues 55–64 the composition is skewed to basic residues; that stretch reads RMRRTKRKRF.

Belongs to the bacterial ribosomal protein bS21 family.

This Elusimicrobium minutum (strain Pei191) protein is Small ribosomal subunit protein bS21.